We begin with the raw amino-acid sequence, 251 residues long: MPKRDAPWRSMAGTSKVSRNANYSPRAGMIHKFDKAAAWVNRPMYRKPRIYRTFRSPDVPRGCEGPCKVQSYEQRHDISHVGKVMCISDITRGNGITHRVGKRFCVKSVYILGKIWMDENIKLKNHTNSVMFWLVRDRRPYGTPMEFGQVFNMFDNEPSTATVKNDLRDRYQVMHKFYAKVTGGQYASNEQALVKRFWKVNNYVVYNHQEAGKYENHTENALLLYMACTHASNPVYATLKIRIYFYDSITN.

A Bipartite nuclear localization signal motif is present at residues 3-20 (KRDAPWRSMAGTSKVSRN). The Nuclear localization signal motif lies at 35 to 49 (KAAAWVNRPMYRKPR). A zinc finger lies at 63–80 (CEGPCKVQSYEQRHDISH). The Nuclear export signal motif lies at 96-117 (ITHRVGKRFCVKSVYILGKIWM). The Bipartite nuclear localization signal signature appears at 195–242 (KRFWKVNNYVVYNHQEAGKYENHTENALLLYMACTHASNPVYATLKIR).

Belongs to the geminiviridae capsid protein family. Homomultimer. Binds to single-stranded and double-stranded viral DNA. Interacts (via nuclear localization signals) with host importin alpha-1a.

Its subcellular location is the virion. The protein resides in the host nucleus. Its function is as follows. Encapsidates the viral DNA into characteristic twinned ('geminate') particles. Binds the genomic viral ssDNA and shuttles it into and out of the cell nucleus. The CP of bipartite geminiviruses is not required for cell-to-cell or systemic movement. The chain is Capsid protein from Cabbage leaf curl virus (isolate Jamaica) (CaLCuV).